The sequence spans 456 residues: Glutamyl-tRNA(Gln) amidotransferase subunit A (456 aa).

Catalysis depends on charge relay system residues Lys74 and Ser149. Ser173 acts as the Acyl-ester intermediate in catalysis.

Belongs to the amidase family. GatA subfamily. Heterotrimer of A, B and C subunits.

It carries out the reaction L-glutamyl-tRNA(Gln) + L-glutamine + ATP + H2O = L-glutaminyl-tRNA(Gln) + L-glutamate + ADP + phosphate + H(+). Its function is as follows. Allows the formation of correctly charged Gln-tRNA(Gln) through the transamidation of misacylated Glu-tRNA(Gln) in organisms which lack glutaminyl-tRNA synthetase. The reaction takes place in the presence of glutamine and ATP through an activated gamma-phospho-Glu-tRNA(Gln). This chain is Glutamyl-tRNA(Gln) amidotransferase subunit A, found in Methanobrevibacter smithii (strain ATCC 35061 / DSM 861 / OCM 144 / PS).